The chain runs to 468 residues: 6-phospho-beta-galactosidase (468 aa).

Residues Q19, H116, N159, E160, and N297 each coordinate D-galactose 6-phosphate. E160 acts as the Proton donor in catalysis. E375 acts as the Nucleophile in catalysis. S428, W429, K435, and Y437 together coordinate D-galactose 6-phosphate.

Belongs to the glycosyl hydrolase 1 family.

It carries out the reaction a 6-phospho-beta-D-galactoside + H2O = D-galactose 6-phosphate + an alcohol. The protein operates within carbohydrate metabolism; lactose degradation; D-galactose 6-phosphate and beta-D-glucose from lactose 6-phosphate: step 1/1. The sequence is that of 6-phospho-beta-galactosidase from Streptococcus pyogenes serotype M2 (strain MGAS10270).